A 1439-amino-acid chain; its full sequence is Fanconi anemia group D2 protein (1439 aa).

A Glycyl lysine isopeptide (Lys-Gly) (interchain with G-Cter in ubiquitin) cross-link involves residue K563.

It belongs to the Fanconi anemia protein FANCD2 family. In terms of assembly, homodimer; cannot be ubiquitinated and does not bind DNA. Part of a FANCI-FANCD2 heterodimeric complex that binds and scans dsDNA for DNA damage. Interacts directly with FANCE and FANCI. Interacts with USP1 and MEN1. The ubiquitinated form specifically interacts with BRCA1 and BLM. Both the nonubiquitinated and the monoubiquitinated forms interact with BRCA2; this interaction is mediated by phosphorylated FANCG and the complex also includes XCCR3. The ubiquitinated form specifically interacts with MTMR15/FAN1 (via UBZ-type zinc finger), leading to recruit MTMR15/FAN1 to sites of DNA damage. Interacts with DCLRE1B/Apollo. Interacts with POLN. Interacts with UHRF1 and UHRF2; these interactions promote FANCD2 activation. Post-translationally, monoubiquitinated on Lys-563 during S phase and upon genotoxic stress. Deubiquitinated by USP1 as cells enter G2/M, or once DNA repair is completed. Monoubiquitination prevents DNA release from the FANCI-FANCD2 complex. FANCD2 is only ubiquitinated in the FANCI-FANCD2 complex and the monoubiquitination of FANCD2 is promoted by phosphorylation of FANCI. In terms of processing, phosphorylated in response to various genotoxic stresses by ATM and/or ATR.

The protein localises to the nucleus. Required for maintenance of chromosomal stability. Promotes accurate and efficient pairing of homologs during meiosis. Involved in the repair of DNA double-strand breaks, both by homologous recombination and single-strand annealing. The FANCI-FANCD2 complex binds and scans double-stranded DNA (dsDNA) for DNA damage; this complex stalls at DNA junctions between double-stranded DNA and single-stranded DNA. May participate in S phase and G2 phase checkpoint activation upon DNA damage. Plays a role in preventing breakage and loss of missegregating chromatin at the end of cell division, particularly after replication stress. Required for the targeting, or stabilization, of BLM to non-centromeric abnormal structures induced by replicative stress. Promotes BRCA2/FANCD1 loading onto damaged chromatin. May also be involved in B-cell immunoglobulin isotype switching. The polypeptide is Fanconi anemia group D2 protein (Gallus gallus (Chicken)).